The sequence spans 314 residues: tRNA uridine(34) hydroxylase (314 aa).

The Rhodanese domain maps to 135–229 (SDPDTIVIDT…YLEEVPEEES (95 aa)). Cys-189 serves as the catalytic Cysteine persulfide intermediate.

Belongs to the TrhO family.

The enzyme catalyses uridine(34) in tRNA + AH2 + O2 = 5-hydroxyuridine(34) in tRNA + A + H2O. Functionally, catalyzes oxygen-dependent 5-hydroxyuridine (ho5U) modification at position 34 in tRNAs. The sequence is that of tRNA uridine(34) hydroxylase from Agrobacterium fabrum (strain C58 / ATCC 33970) (Agrobacterium tumefaciens (strain C58)).